A 350-amino-acid chain; its full sequence is Biotin synthase (350 aa).

Residues 41–268 (NEVQISRLLS…KSRVRLSAGR (228 aa)) enclose the Radical SAM core domain. Residues cysteine 56, cysteine 60, and cysteine 63 each coordinate [4Fe-4S] cluster. Residues cysteine 100, cysteine 131, cysteine 191, and arginine 263 each coordinate [2Fe-2S] cluster.

Belongs to the radical SAM superfamily. Biotin synthase family. As to quaternary structure, homodimer. The cofactor is [4Fe-4S] cluster. [2Fe-2S] cluster is required as a cofactor.

It catalyses the reaction (4R,5S)-dethiobiotin + (sulfur carrier)-SH + 2 reduced [2Fe-2S]-[ferredoxin] + 2 S-adenosyl-L-methionine = (sulfur carrier)-H + biotin + 2 5'-deoxyadenosine + 2 L-methionine + 2 oxidized [2Fe-2S]-[ferredoxin]. The protein operates within cofactor biosynthesis; biotin biosynthesis; biotin from 7,8-diaminononanoate: step 2/2. In terms of biological role, catalyzes the conversion of dethiobiotin (DTB) to biotin by the insertion of a sulfur atom into dethiobiotin via a radical-based mechanism. The polypeptide is Biotin synthase (Shewanella frigidimarina (strain NCIMB 400)).